The primary structure comprises 65 residues: Large ribosomal subunit protein bL35 (65 aa).

The segment at 1 to 23 is disordered; that stretch reads MPKIKTNRGAAKRFKKTGTGKVK. Residues 10–23 show a composition bias toward basic residues; sequence AAKRFKKTGTGKVK.

This sequence belongs to the bacterial ribosomal protein bL35 family.

In Trichlorobacter lovleyi (strain ATCC BAA-1151 / DSM 17278 / SZ) (Geobacter lovleyi), this protein is Large ribosomal subunit protein bL35.